The primary structure comprises 410 residues: Phthiocerol/phthiodiolone dimycocerosyl transferase (410 aa).

Residue His-118 is the Proton acceptor of the active site.

The protein belongs to the acyltransferase PapA5 family. In terms of assembly, monomer. Interacts directly with the acyl carrier protein (ACP) domain of the mycocerosic acid synthase (mas) protein.

The enzyme catalyses 2 a mycocerosyl-[mycocerosic acid synthase] + a phthiocerol = a dimycocerosyl phthiocerol + 2 holo-[mycocerosic acid synthase].. It catalyses the reaction 2 a mycocerosyl-[mycocerosic acid synthase] + a phthiodiolone = a dimycocerosyl phthiodiolone + 2 holo-[mycocerosic acid synthase].. The catalysed reaction is 2 a mycocerosyl-[mycocerosic acid synthase] + a phenolphthiocerol = a dimycocerosyl phenolphthiocerol + 2 holo-[mycocerosic acid synthase].. Its function is as follows. Catalyzes diesterification of phthiocerol, phthiodiolone, and phenolphthiocerol with mycocerosic acids, the final step in the phthiocerol, phthiodiolone and phenolphthiocerol dimycocerosate esters (PDIM) synthesis. Can directly transfer the mycocerosate bound to the mycocerosic acid synthase (mas) onto the substrate alcohols. The polypeptide is Phthiocerol/phthiodiolone dimycocerosyl transferase (papA5) (Mycobacterium sp. (strain JLS)).